The chain runs to 862 residues: Cone cGMP-specific 3',5'-cyclic phosphodiesterase subunit alpha' (862 aa).

2 GAF domains span residues 75 to 224 and 256 to 433; these read SMEK…SLVL and DIER…GWSV. Residues Ser-97, Asn-116, 169 to 172, and Thr-176 each bind 3',5'-cyclic GMP; that span reads DKKT. The 334-residue stretch at 486-819 folds into the PDEase domain; it reads DEKDLIRILK…VEWKTRADEY (334 aa). Catalysis depends on His-562, which acts as the Proton donor. 4 residues coordinate a divalent metal cation: His-566, His-602, Asp-603, and Asp-723. The segment covering 830 to 842 has biased composition (basic and acidic residues); the sequence is KKKEEEAAAKKAE. Positions 830–862 are disordered; sequence KKKEEEAAAKKAENAAGGGGGGEDGKSKTCIVL. Residue Cys-859 is modified to Cysteine methyl ester. A lipid anchor (S-geranylgeranyl cysteine) is attached at Cys-859. A propeptide spans 860–862 (removed in mature form); sequence IVL.

Belongs to the cyclic nucleotide phosphodiesterase family. As to quaternary structure, composed of two alpha' subunits that are associated with 3 smaller proteins of 11, 13, and 15 kDa. A divalent metal cation serves as cofactor.

Its subcellular location is the cell membrane. It catalyses the reaction 3',5'-cyclic GMP + H2O = GMP + H(+). Its function is as follows. As cone-specific cGMP phosphodiesterase, it plays an essential role in light detection and cone phototransduction by rapidly decreasing intracellular levels of cGMP. The polypeptide is Cone cGMP-specific 3',5'-cyclic phosphodiesterase subunit alpha' (PDE6C) (Gallus gallus (Chicken)).